Here is a 159-residue protein sequence, read N- to C-terminus: Large ribosomal subunit protein uL13 (159 aa).

It belongs to the universal ribosomal protein uL13 family. As to quaternary structure, part of the 50S ribosomal subunit.

Its function is as follows. This protein is one of the early assembly proteins of the 50S ribosomal subunit, although it is not seen to bind rRNA by itself. It is important during the early stages of 50S assembly. This Methanopyrus kandleri (strain AV19 / DSM 6324 / JCM 9639 / NBRC 100938) protein is Large ribosomal subunit protein uL13.